Reading from the N-terminus, the 512-residue chain is MYYRETMLAFVPYLAVFVACYGLVYYRRKRQRLPLPPGPPQLPLVGNLYQIPEMNPWRTYREWHQKYGPIITVKSGLTNTIILGSHKAARDLLDKRNRNYGSRPHFILIGDFIYGGNQTSLLPTGQRWRIHRRILSAFGNVRTSQRYRILYDAESKRLLREILHGGDFFEPFHHYFVRILFALTYGKRVTGSHDPEARDVIEIVDVVLKEASRSSVPEAFPILNSLPGALAPWKRRAQLLFEQHSRLFDNHMNAALANKPWNFCKQALRLKASSEVDRVELNFILGSITEATHSGSMVLGVFIMANILHPDAVRWVQEEIDRVIGPDRLPSFDDMAKLPYLNAYLLEVMRWRPITPGGMPHASFQDDEYMGYHIPKGTTVVANHWSMDFDESVFTDPYEFRPQRWIEDPNLPSIAFGFGTRICPGRHIAESSIFIVAARLLWSFNFDYAYEDGKRQEIDSWNMTQGLDSGPMPFKASFKIRSPKHQEVMDRECGVSDLDIDAILDKIGADFL.

A helical transmembrane segment spans residues 6-26; it reads TMLAFVPYLAVFVACYGLVYY. Cys-423 is a binding site for heme.

Belongs to the cytochrome P450 family. Requires heme as cofactor.

The protein resides in the membrane. In terms of biological role, cytochrome P450 monooxygenase; part of the gene cluster that mediates the biosynthesis of the alkaloid (-)-FR901483, a potent immunosuppressant that shows efficacy in animal models and a probable inhibitor of purine nucleotide biosynthesis by targeting phosphoribosylpyrophosphate amidotransferase (PPAT). The only unassigned enzyme in the cluster is the second cytochrome P450 monooxygenase FrzL. The biosynthesis of (-)-FR901483 starts with the condensation of two L-tyrosines to yield (S,S)-dityrosyl-piperazine. This process occurs in 3 steps with the non-canonical nonribosomal peptide synthetase FrzA catalyzing the reduction of L-tyrosine into L-tyrosinal, the spontaneous condensation of 2 L-tyrosinal units, and the subsequent reduction by the NmrA-like family domain-containing oxidoreductase FrzB. The cytochrome P450 monooxygenase FrzC then performs coupling between N10 and C1' to morph the piperazine into a 1,4-diazabicyclo[3.2.1]octane spiro-fused to a 2,5-cyclohexadienone. The dienone portion is further reduced to cyclohexanone by the flavin-dependent reductase FrzD. The methyltranserases (MTs) FrzE and FrzF are then involved in the methylation at the C10' amine and the C4 phenolic oxygen, respectively. The order of the two MTs appear to be interchangeable. Cleavage of the C9-N10' bond by the dioxygenase FrzG then leads to formation of a conjugated iminium. In addition to the oxidation of C9, an additional dehydrogenation between C7 and C8 can occur to give a likely shunt product. The next biosynthetic step is the intramolecular aldol condensation catalyzed by the newly identified aldolase FrzH to yield an aza-tricyclic product with the formation of a C9-C3' bond. The short-chain dehydrogenase/reductase FrzI then produces dephospho-(-)-FR901483 that is phosphorylated at C4'-OH into (-)-FR901483 by the phosphotransferase FrzJ. The protein is Cytochrome P450 monooxygenase FrzL of Cladobotryum sp.